The chain runs to 542 residues: Chondroitin sulfate N-acetylgalactosaminyltransferase 2 (542 aa).

At 1 to 11 (MPRRGLILHTR) the chain is on the cytoplasmic side. Residues 12–32 (THWLLLGLALLCSLVLFMYLL) traverse the membrane as a helical; Signal-anchor for type II membrane protein segment. The Lumenal portion of the chain corresponds to 33–542 (ECAPQTDGNA…AYRTNSEAVG (510 aa)). An N-linked (GlcNAc...) asparagine glycan is attached at Asn41. Residues 59-105 (ALLQEQEEHYQTRATSLKRQIAQLKQELQEMSEKMRSLQERRNVGAN) adopt a coiled-coil conformation. Asn333 carries an N-linked (GlcNAc...) asparagine glycan. Residues Asp369 and His486 each coordinate a divalent metal cation.

This sequence belongs to the chondroitin N-acetylgalactosaminyltransferase family. As to expression, ubiquitous.

It localises to the golgi apparatus. The protein resides in the golgi stack membrane. It catalyses the reaction 3-O-(beta-D-GlcA-(1-&gt;3)-beta-D-Gal-(1-&gt;3)-beta-D-Gal-(1-&gt;4)-beta-D-Xyl)-L-seryl-[protein] + UDP-N-acetyl-alpha-D-galactosamine = 3-O-(beta-D-GalNAc-(1-&gt;4)-beta-D-GlcA-(1-&gt;3)-beta-D-Gal-(1-&gt;3)-beta-D-Gal-(1-&gt;4)-beta-D-Xyl)-L-seryl-[protein] + UDP + H(+). Its function is as follows. Transfers 1,4-N-acetylgalactosamine (GalNAc) from UDP-GalNAc to the non-reducing end of glucuronic acid (GlcUA). Required for addition of the first GalNAc to the core tetrasaccharide linker and for elongation of chondroitin chains. In Homo sapiens (Human), this protein is Chondroitin sulfate N-acetylgalactosaminyltransferase 2 (CSGALNACT2).